The primary structure comprises 731 residues: 1,4-alpha-glucan branching enzyme GlgB (731 aa).

Aspartate 412 acts as the Nucleophile in catalysis. The active-site Proton donor is the glutamate 465.

The protein belongs to the glycosyl hydrolase 13 family. GlgB subfamily. In terms of assembly, monomer.

It carries out the reaction Transfers a segment of a (1-&gt;4)-alpha-D-glucan chain to a primary hydroxy group in a similar glucan chain.. It participates in glycan biosynthesis; glycogen biosynthesis. Functionally, catalyzes the formation of the alpha-1,6-glucosidic linkages in glycogen by scission of a 1,4-alpha-linked oligosaccharide from growing alpha-1,4-glucan chains and the subsequent attachment of the oligosaccharide to the alpha-1,6 position. The protein is 1,4-alpha-glucan branching enzyme GlgB of Bordetella parapertussis (strain 12822 / ATCC BAA-587 / NCTC 13253).